Here is a 49-residue protein sequence, read N- to C-terminus: uncharacterized protein (49 aa).

The N-terminal stretch at 1 to 22 is a signal peptide; that stretch reads MVFLLFLSFVLSSIFLVPLVYM.

The protein localises to the secreted. This is an uncharacterized protein from Dictyostelium discoideum (Social amoeba).